We begin with the raw amino-acid sequence, 848 residues long: Neprilysin-11 (848 aa).

Over 1-74 (MPFGNDPPDY…WWKSRTTMEK (74 aa)) the chain is Cytoplasmic. Residues 75-95 (LLLPVLLLFCLLTAVLLAVII) traverse the membrane as a helical; Signal-anchor for type II membrane protein segment. Over 96-848 (NTDKRIEAMK…VNPDHKCIVW (753 aa)) the chain is Extracellular. The tract at residues 108–161 (HATQTEHAGFGDPTENPTKTAEDPRVPPIVPEAPTSPEPEVTTSTEKPKEPEVC) is disordered. Residues 133 to 144 (VPPIVPEAPTSP) show a composition bias toward pro residues. In terms of domain architecture, Peptidase M13 spans 160 to 848 (VCSTPGCVRA…VNPDHKCIVW (689 aa)). Cysteine 161 and cysteine 166 are disulfide-bonded. N-linked (GlcNAc...) asparagine glycans are attached at residues asparagine 178, asparagine 249, asparagine 284, asparagine 312, asparagine 337, asparagine 364, asparagine 398, and asparagine 438. 4 disulfides stabilise this stretch: cysteine 184/cysteine 833, cysteine 192/cysteine 793, cysteine 247/cysteine 509, and cysteine 719/cysteine 845. Histidine 682 contributes to the Zn(2+) binding site. Glutamate 683 is a catalytic residue. Histidine 686 contacts Zn(2+). An N-linked (GlcNAc...) asparagine glycan is attached at asparagine 726. Zn(2+) is bound at residue glutamate 744. The Proton donor role is filled by aspartate 748.

The protein belongs to the peptidase M13 family. Zn(2+) serves as cofactor.

Its subcellular location is the cell membrane. Probable cell surface protease. The polypeptide is Neprilysin-11 (nep-11) (Caenorhabditis elegans).